A 494-amino-acid chain; its full sequence is MIELLSIALKHSNIILNSIFIGAFILNLLFAFTIIFMERRSANSIWAWLLVLVFLPLFGFILYLLLGRQIQRDQIFKIDKEDKKGLELIVDEQLAALKNENFSNSNYQIVKFKEMIQMLLYNNAAFLTTDNDLKIYTDGQEKFDDLIQDIRNATDYIHFQYYIIQNDELGRTILNELGKKAEQGVEVKILYDDMGSRGLRKKGLRPFRNKGGHAEAFFPSKLPLINLRMNNRNHRKIVVIDGQIGYVGGFNVGDEYLGKSKKFGYWRDTHLRIVGDAVNALQLRFILDWNSQATRDHISYDDRYFPDVNSGGTIGVQIASSGPDEEWEQIKYGYLKMISSAKKSIYIQSPYFIPDQAFLDSIKIAALGGVDVNIMIPNKPDHPFVFWATLKNAASLLDAGVKVFHYDNGFLHSKTLVIDDEIASVGTANMDHRSFTLNFEVNAFIYDQQIAKKLKQAFIDDLAVSSELTKARYAKRSLWIKFKEGISQLLSPIL.

2 helical membrane-spanning segments follow: residues 14-34 (IILNSIFIGAFILNLLFAFTI) and 45-65 (IWAWLLVLVFLPLFGFILYLL). PLD phosphodiesterase domains follow at residues 229-256 (MNNRNHRKIVVIDGQIGYVGGFNVGDEY) and 407-434 (DNGFLHSKTLVIDDEIASVGTANMDHRS). Residues histidine 234, lysine 236, aspartate 241, histidine 412, lysine 414, and aspartate 419 contribute to the active site.

It belongs to the phospholipase D family. Cardiolipin synthase subfamily.

The protein resides in the cell membrane. It carries out the reaction 2 a 1,2-diacyl-sn-glycero-3-phospho-(1'-sn-glycerol) = a cardiolipin + glycerol. Its function is as follows. Catalyzes the reversible phosphatidyl group transfer from one phosphatidylglycerol molecule to another to form cardiolipin (CL) (diphosphatidylglycerol) and glycerol. In Staphylococcus aureus (strain Mu50 / ATCC 700699), this protein is Cardiolipin synthase (cls).